Reading from the N-terminus, the 939-residue chain is Vacuolar membrane protease (939 aa).

The Cytoplasmic portion of the chain corresponds to 1–11 (MGFNSIFKFRK). The chain crosses the membrane as a helical span at residues 12-32 (TSLSLLLFAVYFIIGILYFID). Residues 33 to 356 (KTRYKHSLPI…TFVAIPSTKL (324 aa)) lie on the Vacuolar side of the membrane. Asn-59, Asn-88, and Asn-114 each carry an N-linked (GlcNAc...) asparagine glycan. Residues His-149 and Asp-161 each coordinate Zn(2+). The active-site Proton acceptor is the Glu-193. The Zn(2+) site is built by Glu-194, Glu-219, and His-293. Residue Asn-326 is glycosylated (N-linked (GlcNAc...) asparagine). A helical transmembrane segment spans residues 357 to 377 (FWINIALLIIMPIISIFLFSI). Residues 378-388 (VKKYNNEIIDS) lie on the Cytoplasmic side of the membrane. A helical transmembrane segment spans residues 389–409 (GNIWWRLPISAMSSGTIIIFT). Residues 410–424 (TKLIMKWNPYILSRN) lie on the Vacuolar side of the membrane. The chain crosses the membrane as a helical span at residues 425–445 (FLLPLIGLTFEFIILNSYILT). Over 446-453 (MFENLSSS) the chain is Cytoplasmic. A helical transmembrane segment spans residues 454–474 (FDFKTIAINEISFLFWIVLAY). The Vacuolar segment spans residues 475–491 (QTWKLYDNNYQNTGIYP). The helical transmembrane segment at 492–512 (FTICYIVMATAGNIGYLFLIF) threads the bilayer. Residues 513-588 (KNIEIVEDEE…NQRTILKESK (76 aa)) are Cytoplasmic-facing. Positions 540–552 (YRDEINGRDDSSR) are enriched in basic and acidic residues. Residues 540-561 (YRDEINGRDDSSRDSNSASIPT) are disordered. The helical transmembrane segment at 589–609 (LVYNYDWIIEFLLVVPFSTFL) threads the bilayer. Topologically, residues 610-636 (LYNSLELIMDAVNQTIQETGDLYKVYK) are vacuolar. Asn-622 is a glycosylation site (N-linked (GlcNAc...) asparagine). The chain crosses the membrane as a helical span at residues 637 to 657 (ILAIGSILISIPTLPFAYKIG). Residues 658–663 (CQLGKT) are Cytoplasmic-facing. Residues 664–684 (LTFISIGCLLISMALAPFTEM) form a helical membrane-spanning segment. Topologically, residues 685–939 (NPIKFRFMQV…LVKLTEAMVL (255 aa)) are vacuolar. Asn-810 and Asn-820 each carry an N-linked (GlcNAc...) asparagine glycan.

The protein belongs to the peptidase M28 family. It depends on Zn(2+) as a cofactor.

The protein localises to the vacuole membrane. May be involved in vacuolar sorting and osmoregulation. This chain is Vacuolar membrane protease, found in Vanderwaltozyma polyspora (strain ATCC 22028 / DSM 70294 / BCRC 21397 / CBS 2163 / NBRC 10782 / NRRL Y-8283 / UCD 57-17) (Kluyveromyces polysporus).